Here is a 539-residue protein sequence, read N- to C-terminus: Eukaryotic translation initiation factor 3 subunit L (539 aa).

The region spanning 306-514 (TFSDILLYIQ…IHIADTKVSH (209 aa)) is the PCI domain.

The protein belongs to the eIF-3 subunit L family. Component of the eukaryotic translation initiation factor 3 (eIF-3) complex. The eIF-3 complex interacts with pix.

Its subcellular location is the cytoplasm. Its function is as follows. Component of the eukaryotic translation initiation factor 3 (eIF-3) complex, which is involved in protein synthesis of a specialized repertoire of mRNAs and, together with other initiation factors, stimulates binding of mRNA and methionyl-tRNAi to the 40S ribosome. The eIF-3 complex specifically targets and initiates translation of a subset of mRNAs involved in cell proliferation. This Drosophila sechellia (Fruit fly) protein is Eukaryotic translation initiation factor 3 subunit L.